The sequence spans 190 residues: Abscisic acid receptor PYL2 (190 aa).

Residues 28-182 (FEPDPTTCTS…NLQKLGVAAT (155 aa)) form an START-like region. Residues K64, 93-98 (ASTSTE), 120-126 (RLKNYKS), and E147 each bind abscisate. Positions 89–93 (SGLPA) match the Gate loop motif. The Latch loop signature appears at 119-121 (HRL).

It belongs to the PYR/PYL/RCAR abscisic acid intracellular receptor family. Homodimer. Binds ABA on one subunit only. Interacts with HAB1, ABI1 and ABI2, and possibly with other PP2Cs. Binds to CARs protein in an ABA-independent manner, both at the plasma membrane and in the nucleus.

It is found in the cytoplasm. The protein localises to the nucleus. It localises to the cell membrane. In terms of biological role, receptor for abscisic acid (ABA) required for ABA-mediated responses such as stomatal closure and germination inhibition. Inhibits the activity of group-A protein phosphatases type 2C (PP2Cs) when activated by ABA. Can be activated by both (-)-ABA and (+)-ABA. The polypeptide is Abscisic acid receptor PYL2 (PYL2) (Arabidopsis thaliana (Mouse-ear cress)).